Consider the following 514-residue polypeptide: Ribonuclease Y (514 aa).

Residues 3–23 (VLWMVLGLAIGIAVGAAAGYI) form a helical membrane-spanning segment. The KH domain occupies 203-266 (TVKAVELPSD…EVARIAMERL (64 aa)). In terms of domain architecture, HD spans 330 to 423 (VLAHSVEVAN…VATADAVSAA (94 aa)).

The protein belongs to the RNase Y family.

It is found in the cell membrane. In terms of biological role, endoribonuclease that initiates mRNA decay. The chain is Ribonuclease Y from Rubrobacter xylanophilus (strain DSM 9941 / JCM 11954 / NBRC 16129 / PRD-1).